A 261-amino-acid chain; its full sequence is Chloroplastic import inner membrane translocase subunit HP30-1 (261 aa).

Transmembrane regions (helical) follow at residues 59 to 77, 113 to 129, 139 to 155, and 163 to 180; these read AAVV…GGLM, NFAA…SVMK, SAVV…SLVS, and MNAI…GVFF.

This sequence belongs to the Tim17/Tim22/Tim23 family. As to quaternary structure, probable component of a protein-conducting channel made of HP30-1, HP30-2 and HP20 that mediates the import of transit sequence-less proteins into the chloroplastic inner membrane. Interacts with CEQORH.

The protein localises to the plastid. The protein resides in the chloroplast inner membrane. Its function is as follows. Together with HP30-2 and HP20, triggers the import and insertion of transit sequence-less multi-pass transmembrane proteins (e.g. CEQORH) into the chloroplastic inner membrane. This Arabidopsis thaliana (Mouse-ear cress) protein is Chloroplastic import inner membrane translocase subunit HP30-1.